The following is a 631-amino-acid chain: uncharacterized protein (631 aa).

The N-terminal stretch at 1–20 is a signal peptide; it reads MVRFVSILSLFGCAATLVTA. Over 21–105 the chain is Lumenal; the sequence is HDDMDMDMDM…AGNRSALRYH (85 aa). Residues Asn-87 and Asn-98 are each glycosylated (N-linked (GlcNAc...) asparagine). A helical transmembrane segment spans residues 106 to 126; that stretch reads IITLLLVAFVLYPVSLALSAA. Over 127 to 131 the chain is Cytoplasmic; it reads RSRWY. The helical transmembrane segment at 132–152 threads the bilayer; that stretch reads LPLLFVNLCICISSVMALSVF. Residues 153-170 lie on the Lumenal side of the membrane; the sequence is KNTFPEEDWYAHNIYGTT. The helical transmembrane segment at 171 to 191 threads the bilayer; it reads SVLLLVFMLVHFFAAVLSVPV. Residues 192–322 are Cytoplasmic-facing; the sequence is SLASKKEYRP…LSCVANVVFH (131 aa). Residues 216 to 274 are disordered; the sequence is MVNSARGSPSPSSNRDTLFSLSSDTTTATATNNNKRRRAEGEDEGDNTSNHDTLRDEDY. Ser-219 bears the Phosphoserine mark. The segment covering 220 to 239 has biased composition (polar residues); sequence ARGSPSPSSNRDTLFSLSSD. A Glycyl lysine isopeptide (Lys-Gly) (interchain with G-Cter in ubiquitin) cross-link involves residue Lys-250. A helical transmembrane segment spans residues 323 to 343; sequence MLTYPLFMYIFVDLIIGFAVG. The Lumenal portion of the chain corresponds to 344 to 351; sequence NLLGKGIR. Residues 352 to 372 traverse the membrane as a helical segment; it reads IFNLLAHWIKGGVFFTLGVVS. Residues 373 to 407 are Cytoplasmic-facing; the sequence is LARYCGFAAKYGWAWNNISFTSQLTQTRSSNLLFR. The helical transmembrane segment at 408-428 threads the bilayer; the sequence is FAPAGTFTMEFVESFLIFFYG. Residues 429-451 lie on the Lumenal side of the membrane; the sequence is STNIFLEHLAGNGGAWTAKDLQH. The helical transmembrane segment at 452–472 threads the bilayer; sequence VSIAFMFIGTGLCGLLTEYKL. At 473–529 the chain is on the cytoplasmic side; sequence NHWRFEHARKRPQTDVVAATPGYSPNPFPAFTIFWTGILMSQHAQSSQFSTTIHTQW. A helical transmembrane segment spans residues 530-550; the sequence is GYLLSYGSFFRLLTFLILFLV. At 551–598 the chain is on the lumenal side; the sequence is PNTNSAASKPFTELITSFCLLCGGLVFMESTDQSIEAMEYRGFTPMFT. Residues 599-619 form a helical membrane-spanning segment; it reads FNLSVGFVSLLMAWEMILFIW. The Cytoplasmic portion of the chain corresponds to 620–631; that stretch reads KDWLIKTRKTSL.

To S.pombe SpBC3B8.06.

Its subcellular location is the membrane. This is an uncharacterized protein from Saccharomyces cerevisiae (strain ATCC 204508 / S288c) (Baker's yeast).